The chain runs to 881 residues: Translation initiation factor IF-2 (881 aa).

Disordered regions lie at residues 53–92 and 163–292; these read RSHG…SKTT and AEAE…FERP. Over residues 81 to 92 the composition is skewed to polar residues; it reads EVTVNSGRSKTT. The span at 172–186 shows a compositional bias: low complexity; that stretch reads EAAAAAKAAEALAAA. Over residues 219 to 236 the composition is skewed to basic and acidic residues; it reads RNDDRNNRSAPRNERGPG. Residues 254 to 263 are compositionally biased toward low complexity; sequence GNSNNSNTRG. The region spanning 380-549 is the tr-type G domain; the sequence is QRPPVVTIMG…SIQAELLELK (170 aa). The tract at residues 389 to 396 is G1; the sequence is GHVDHGKT. GTP is bound at residue 389–396; the sequence is GHVDHGKT. A G2 region spans residues 414-418; the sequence is GITQH. The G3 stretch occupies residues 435 to 438; the sequence is DTPG. Residues 435 to 439 and 489 to 492 each bind GTP; these read DTPGH and NKID. The G4 stretch occupies residues 489–492; sequence NKID. A G5 region spans residues 525–527; the sequence is SAK.

It belongs to the TRAFAC class translation factor GTPase superfamily. Classic translation factor GTPase family. IF-2 subfamily.

It is found in the cytoplasm. In terms of biological role, one of the essential components for the initiation of protein synthesis. Protects formylmethionyl-tRNA from spontaneous hydrolysis and promotes its binding to the 30S ribosomal subunits. Also involved in the hydrolysis of GTP during the formation of the 70S ribosomal complex. The sequence is that of Translation initiation factor IF-2 from Stenotrophomonas maltophilia (strain K279a).